We begin with the raw amino-acid sequence, 337 residues long: 3-isopropylmalate dehydrogenase (337 aa).

Substrate-binding residues include arginine 88, arginine 98, arginine 122, and aspartate 212. Residues aspartate 212, aspartate 236, and aspartate 240 each contribute to the Mg(2+) site. 272–284 (GSAPDIAGKGIAD) contributes to the NAD(+) binding site.

Belongs to the isocitrate and isopropylmalate dehydrogenases family. LeuB type 2 subfamily. In terms of assembly, homodimer. It depends on Mg(2+) as a cofactor. Requires Mn(2+) as cofactor.

It is found in the cytoplasm. The catalysed reaction is (2R,3S)-3-isopropylmalate + NAD(+) = 4-methyl-2-oxopentanoate + CO2 + NADH. It participates in amino-acid biosynthesis; L-leucine biosynthesis; L-leucine from 3-methyl-2-oxobutanoate: step 3/4. Its function is as follows. Catalyzes the oxidation of 3-carboxy-2-hydroxy-4-methylpentanoate (3-isopropylmalate) to 3-carboxy-4-methyl-2-oxopentanoate. The product decarboxylates to 4-methyl-2 oxopentanoate. The polypeptide is 3-isopropylmalate dehydrogenase (Rhodococcus erythropolis (strain PR4 / NBRC 100887)).